Here is a 608-residue protein sequence, read N- to C-terminus: UvrABC system protein C (608 aa).

The GIY-YIG domain maps to 13–91 (HDPGVYRMFD…IKTFQPRYNV (79 aa)). One can recognise a UVR domain in the interval 201-236 (QQVLDHLIGKMERASRALNFEEAARYRDQIQAVRSV).

The protein belongs to the UvrC family. As to quaternary structure, interacts with UvrB in an incision complex.

It is found in the cytoplasm. Its function is as follows. The UvrABC repair system catalyzes the recognition and processing of DNA lesions. UvrC both incises the 5' and 3' sides of the lesion. The N-terminal half is responsible for the 3' incision and the C-terminal half is responsible for the 5' incision. The sequence is that of UvrABC system protein C from Mannheimia succiniciproducens (strain KCTC 0769BP / MBEL55E).